The sequence spans 517 residues: uncharacterized protein (517 aa).

Disordered stretches follow at residues Lys16–Lys148, Val156–Thr175, and Lys216–Glu351. A compositionally biased stretch (low complexity) spans Asn48–Lys75. The span at Phe84–Thr112 shows a compositional bias: acidic residues. The span at Gln127 to Lys143 shows a compositional bias: pro residues. Residues Val236–Gln252 are compositionally biased toward polar residues. Pro residues predominate over residues Ser254–Leu266. Low complexity-rich tracts occupy residues Asn271–Ile320 and Ser327–Asn347. The stretch at Asp340–Asn452 forms a coiled coil.

This sequence belongs to the ENTR1 family.

This is an uncharacterized protein from Dictyostelium discoideum (Social amoeba).